Consider the following 475-residue polypeptide: Endoglucanase A (475 aa).

The first 26 residues, 1–26 (MKKTTAFLLCFLMIFTALLPMQNANA), serve as a signal peptide directing secretion. The active site involves His-147. Glu-195 (proton donor) is an active-site residue. The Nucleophile role is filled by Glu-332. The 66-residue stretch at 409–474 (PVIVYGDYNN…LLGMVSKLPS (66 aa)) folds into the Dockerin domain.

Belongs to the glycosyl hydrolase 5 (cellulase A) family.

The catalysed reaction is Endohydrolysis of (1-&gt;4)-beta-D-glucosidic linkages in cellulose, lichenin and cereal beta-D-glucans.. Its function is as follows. The biological conversion of cellulose to glucose generally requires three types of hydrolytic enzymes: (1) Endoglucanases which cut internal beta-1,4-glucosidic bonds; (2) Exocellobiohydrolases that cut the disaccharide cellobiose from the non-reducing end of the cellulose polymer chain; (3) Beta-1,4-glucosidases which hydrolyze the cellobiose and other short cello-oligosaccharides to glucose. The polypeptide is Endoglucanase A (celCCA) (Ruminiclostridium cellulolyticum (strain ATCC 35319 / DSM 5812 / JCM 6584 / H10) (Clostridium cellulolyticum)).